Here is a 156-residue protein sequence, read N- to C-terminus: ATP synthase subunit b (156 aa).

Residues 4 to 26 traverse the membrane as a helical segment; that stretch reads GATFWGPMISFALFVWFTMKFVW.

This sequence belongs to the ATPase B chain family. As to quaternary structure, F-type ATPases have 2 components, F(1) - the catalytic core - and F(0) - the membrane proton channel. F(1) has five subunits: alpha(3), beta(3), gamma(1), delta(1), epsilon(1). F(0) has three main subunits: a(1), b(2) and c(10-14). The alpha and beta chains form an alternating ring which encloses part of the gamma chain. F(1) is attached to F(0) by a central stalk formed by the gamma and epsilon chains, while a peripheral stalk is formed by the delta and b chains.

It localises to the cell inner membrane. Functionally, f(1)F(0) ATP synthase produces ATP from ADP in the presence of a proton or sodium gradient. F-type ATPases consist of two structural domains, F(1) containing the extramembraneous catalytic core and F(0) containing the membrane proton channel, linked together by a central stalk and a peripheral stalk. During catalysis, ATP synthesis in the catalytic domain of F(1) is coupled via a rotary mechanism of the central stalk subunits to proton translocation. In terms of biological role, component of the F(0) channel, it forms part of the peripheral stalk, linking F(1) to F(0). The chain is ATP synthase subunit b from Halorhodospira halophila (strain DSM 244 / SL1) (Ectothiorhodospira halophila (strain DSM 244 / SL1)).